Here is a 201-residue protein sequence, read N- to C-terminus: MTDQNHDTQADDDANDAPATDFSNQFLIAMPQMVEGSLAGSVIYVCEHTTRGALGLVINRPTDLTLESLFERIDLTLEIRPVKDSPVFFGGPVQTDRGFVLHAPAGDYSSSIKLGDLALTTSRDVLQAVADGNGPARMLVTLGYAGWGAGQLESEMAQNAWLTVGADADIIFDVPPEDRYPAALKLLGIDPVMLSGGAGHA.

It belongs to the UPF0301 (AlgH) family.

The protein is UPF0301 protein Bpet0561 of Bordetella petrii (strain ATCC BAA-461 / DSM 12804 / CCUG 43448).